The following is a 339-amino-acid chain: Aspartate carbamoyltransferase catalytic subunit (339 aa).

Carbamoyl phosphate contacts are provided by arginine 59 and threonine 60. Lysine 87 is an L-aspartate binding site. Carbamoyl phosphate-binding residues include arginine 109, histidine 142, and glutamine 145. Residues arginine 182 and arginine 253 each contribute to the L-aspartate site. Glycine 294 and proline 295 together coordinate carbamoyl phosphate.

This sequence belongs to the aspartate/ornithine carbamoyltransferase superfamily. ATCase family. Heterododecamer (2C3:3R2) of six catalytic PyrB chains organized as two trimers (C3), and six regulatory PyrI chains organized as three dimers (R2).

It catalyses the reaction carbamoyl phosphate + L-aspartate = N-carbamoyl-L-aspartate + phosphate + H(+). Its pathway is pyrimidine metabolism; UMP biosynthesis via de novo pathway; (S)-dihydroorotate from bicarbonate: step 2/3. Catalyzes the condensation of carbamoyl phosphate and aspartate to form carbamoyl aspartate and inorganic phosphate, the committed step in the de novo pyrimidine nucleotide biosynthesis pathway. The polypeptide is Aspartate carbamoyltransferase catalytic subunit (Prochlorococcus marinus (strain NATL1A)).